The primary structure comprises 381 residues: Creatine kinase B-type (381 aa).

Positions 11–98 (KMKYSVDDEY…FDPVIEDRHG (88 aa)) constitute a Phosphagen kinase N-terminal domain. A creatine-binding site is contributed by valine 72. Residues 125–367 (YVLSSRVRTG…KLLIEMEKRL (243 aa)) enclose the Phosphagen kinase C-terminal domain. Residues 128 to 132 (SSRVR), arginine 130, arginine 132, and histidine 191 each bind ATP. Glutamate 232 serves as a coordination point for creatine. An ATP-binding site is contributed by arginine 236. Threonine 282 is subject to Phosphothreonine; by autocatalysis. Position 285 (serine 285) interacts with creatine. Serine 285 carries the phosphoserine; by autocatalysis modification. Residue threonine 289 is modified to Phosphothreonine; by autocatalysis. ATP contacts are provided by residues arginine 292, arginine 320, 320–325 (RGTGGV), and aspartate 335.

It belongs to the ATP:guanido phosphotransferase family. Dimer of identical or non-identical chains, which can be either B (brain type) or M (muscle type). With MM being the major form in skeletal muscle and myocardium, MB existing in myocardium, and BB existing in many tissues, especially brain. Post-translationally, ba-CK and Bb-CK are phosphorylated. The N-terminus of BA-CK is blocked. In terms of tissue distribution, expressed in almost all tissues and found enriched in various region of the brain, retina, heart, gizzard, gut and sperm.

The protein resides in the cytoplasm. It localises to the cytosol. Its subcellular location is the mitochondrion. The protein localises to the cell membrane. It catalyses the reaction creatine + ATP = N-phosphocreatine + ADP + H(+). In terms of biological role, reversibly catalyzes the transfer of phosphate between ATP and various phosphogens (e.g. creatine phosphate). Creatine kinase isoenzymes play a central role in energy transduction in tissues with large, fluctuating energy demands, such as skeletal muscle, heart, brain and spermatozoa. The protein is Creatine kinase B-type of Gallus gallus (Chicken).